We begin with the raw amino-acid sequence, 773 residues long: E3 ubiquitin-protein ligase RFWD3 (773 aa).

Disordered regions lie at residues 18–67 (VAEQ…SQVG), 92–117 (RVENINPGASEEHRQPSRVNRPIPVS), 139–230 (LRPP…EEVV), and 259–279 (GETLPKQSPQKTNPLLPSVSK). Ser47 is modified (phosphoserine; by ATM and ATR). The segment covering 50 to 59 (APPLLQPAPA) has biased composition (low complexity). At Ser64 the chain carries Phosphoserine; by ATM and ATR. Over residues 151 to 164 (RSRRRRGSASRRSR) the composition is skewed to basic residues. Residues 186–205 (VSRTQPHLPSMSQDSETRNP) are compositionally biased toward polar residues. Low complexity predominate over residues 207 to 221 (SEDLQVSSSSSSDSE). The span at 263–273 (PKQSPQKTNPL) shows a compositional bias: polar residues. Residues 287 to 331 (CTICFEHWTNAGDHRLSALRCGHLFGYKCISKWLKGQARKCPQCN) form an RING-type; degenerate zinc finger. Residues 361 to 403 (SLLKEQMLRKQAELESAQCRLQLQVLTDECSKLHSRVQDLQKL) adopt a coiled-coil conformation. WD repeat units lie at residues 494 to 536 (MHGK…QTYN), 538 to 576 (GRPVWSCCWCLDESNHIYAGLVNGSILVYDLRNTSSHIQ), and 582 to 627 (KARC…SHWP).

Interacts with MDM2 and p53/TP53. Binds to the RPA complex via direct interaction with RPA2. Interacts with RAD51. Phosphorylated at Ser-46 and Ser-63 upon DNA damage by ATM or ATR. ATM phosphorylation occurs at early times upon DNA damage, while ATR is the major kinase at later times. Phosphorylation by ATM and ATR is required to stabilize p53/TP53. Part of the phosphorylation depends upon RPA2 presence.

The protein localises to the nucleus. Its subcellular location is the PML body. It localises to the cytoplasm. The enzyme catalyses S-ubiquitinyl-[E2 ubiquitin-conjugating enzyme]-L-cysteine + [acceptor protein]-L-lysine = [E2 ubiquitin-conjugating enzyme]-L-cysteine + N(6)-ubiquitinyl-[acceptor protein]-L-lysine.. Its pathway is protein modification; protein ubiquitination. Functionally, E3 ubiquitin-protein ligase required for the repair of DNA interstrand cross-links (ICL) in response to DNA damage. Plays a key role in RPA-mediated DNA damage signaling and repair. Acts by mediating ubiquitination of the RPA complex (RPA1, RPA2 and RPA3 subunits) and RAD51 at stalled replication forks, leading to remove them from DNA damage sites and promote homologous recombination. Also mediates the ubiquitination of p53/TP53 in the late response to DNA damage, and acts as a positive regulator of p53/TP53 stability, thereby regulating the G1/S DNA damage checkpoint. May act by catalyzing the formation of short polyubiquitin chains on p53/TP53 that are not targeted to the proteasome. In response to ionizing radiation, interacts with MDM2 and enhances p53/TP53 ubiquitination, possibly by restricting MDM2 from extending polyubiquitin chains on ubiquitinated p53/TP53. Required to translesion DNA synthesis across DNA-protein cross-link adducts by catalyzing ubiquitination of proteins on single-stranded DNA (ssDNA). This is E3 ubiquitin-protein ligase RFWD3 (RFWD3) from Ailuropoda melanoleuca (Giant panda).